The sequence spans 440 residues: Thymidine phosphorylase (440 aa).

It belongs to the thymidine/pyrimidine-nucleoside phosphorylase family. In terms of assembly, homodimer.

It carries out the reaction thymidine + phosphate = 2-deoxy-alpha-D-ribose 1-phosphate + thymine. It functions in the pathway pyrimidine metabolism; dTMP biosynthesis via salvage pathway; dTMP from thymine: step 1/2. The enzymes which catalyze the reversible phosphorolysis of pyrimidine nucleosides are involved in the degradation of these compounds and in their utilization as carbon and energy sources, or in the rescue of pyrimidine bases for nucleotide synthesis. This is Thymidine phosphorylase from Salmonella arizonae (strain ATCC BAA-731 / CDC346-86 / RSK2980).